A 383-amino-acid polypeptide reads, in one-letter code: MDRTCEERPAEDGSDEEDPDSMEAPTRIRDTPEDIVLEAPASGLAFHPARDLLAAGDVDGDVFVFSYSCQEGETKELWSSGHHLKACRAVAFSEDGQKLITVSKDKAIHVLDVEQGQLERRVSKAHGAPINSLLLVDENVLATGDDTGGICLWDQRKEGPLMDMRQHEEYIADMALDPAKKLLLTASGDGCLGIFNIKRRRFELLSEPQSGDLTSVTLMKWGKKVACGSSEGTIYLFNWNGFGATSDRFALRAESIDCMVPVTESLLCTGSTDGVIRAVNILPNRVVGSVGQHTGEPVEELALSHCGRFLASSGHDQRLKFWDMAQLRAVVVDDYRRRKKKGGPLRALSSKTWSTDDFFAGLREEGEDSMAQEEKEETGDDSD.

Residues 1–11 (MDRTCEERPAE) are compositionally biased toward basic and acidic residues. The segment at 1 to 33 (MDRTCEERPAEDGSDEEDPDSMEAPTRIRDTPE) is disordered. A compositionally biased stretch (acidic residues) spans 12 to 21 (DGSDEEDPDS). Phosphoserine is present on serine 14. 7 WD repeats span residues 36–75 (VLEA…GETK), 82–121 (HHLK…LERR), 125–163 (AHGA…PLMD), 166–205 (QHEE…FELL), 208–247 (PQSG…ATSD), 250–289 (ALRA…VVGS), and 293–332 (HTGE…AVVV). Serine 354 is modified (phosphoserine). Positions 363-383 (REEGEDSMAQEEKEETGDDSD) are disordered. Positions 365–383 (EGEDSMAQEEKEETGDDSD) are enriched in acidic residues. A Phosphothreonine modification is found at threonine 378. Serine 382 carries the phosphoserine modification.

The protein belongs to the WD repeat WDR55 family.

It is found in the nucleus. The protein localises to the nucleolus. The protein resides in the cytoplasm. Nucleolar protein that acts as a modulator of rRNA synthesis. Plays a central role during organogenesis. The protein is WD repeat-containing protein 55 (WDR55) of Homo sapiens (Human).